Reading from the N-terminus, the 120-residue chain is uncharacterized protein (120 aa).

This is an uncharacterized protein from Aquifex aeolicus (strain VF5).